Reading from the N-terminus, the 203-residue chain is Large ribosomal subunit protein uL22 (203 aa).

A compositionally biased stretch (polar residues) spans 138–167 (PENTQSGALSQQSQAEQPQNDPENGVDSQL). A disordered region spans residues 138 to 203 (PENTQSGALS…TVLAQEKEVK (66 aa)). Residues 168–177 (SAKTNSTTTA) are compositionally biased toward low complexity. Over residues 183–196 (ADNSTKNDATNTVL) the composition is skewed to polar residues.

It belongs to the universal ribosomal protein uL22 family. In terms of assembly, part of the 50S ribosomal subunit.

In terms of biological role, this protein binds specifically to 23S rRNA; its binding is stimulated by other ribosomal proteins, e.g. L4, L17, and L20. It is important during the early stages of 50S assembly. It makes multiple contacts with different domains of the 23S rRNA in the assembled 50S subunit and ribosome. The globular domain of the protein is located near the polypeptide exit tunnel on the outside of the subunit, while an extended beta-hairpin is found that lines the wall of the exit tunnel in the center of the 70S ribosome. This chain is Large ribosomal subunit protein uL22, found in Mesomycoplasma hyopneumoniae (strain 7448) (Mycoplasma hyopneumoniae).